The chain runs to 277 residues: Large ribosomal subunit protein uL2 (277 aa).

2 disordered regions span residues 35-60 (EKQS…GHKQ) and 225-277 (MNPV…ANKR). The segment covering 43–53 (RNNNGHITTRH) has biased composition (polar residues).

This sequence belongs to the universal ribosomal protein uL2 family. Part of the 50S ribosomal subunit. Forms a bridge to the 30S subunit in the 70S ribosome.

Its function is as follows. One of the primary rRNA binding proteins. Required for association of the 30S and 50S subunits to form the 70S ribosome, for tRNA binding and peptide bond formation. It has been suggested to have peptidyltransferase activity; this is somewhat controversial. Makes several contacts with the 16S rRNA in the 70S ribosome. The protein is Large ribosomal subunit protein uL2 of Methylobacillus flagellatus (strain ATCC 51484 / DSM 6875 / VKM B-1610 / KT).